Reading from the N-terminus, the 98-residue chain is NADH-ubiquinone oxidoreductase chain 4L (98 aa).

The next 3 helical transmembrane spans lie at 1 to 21, 29 to 49, and 61 to 81; these read MSSI…GLLM, SLLC…VTML, and VMLM…LVTV.

Belongs to the complex I subunit 4L family. In terms of assembly, core subunit of respiratory chain NADH dehydrogenase (Complex I) which is composed of 45 different subunits.

It is found in the mitochondrion inner membrane. It catalyses the reaction a ubiquinone + NADH + 5 H(+)(in) = a ubiquinol + NAD(+) + 4 H(+)(out). Core subunit of the mitochondrial membrane respiratory chain NADH dehydrogenase (Complex I) which catalyzes electron transfer from NADH through the respiratory chain, using ubiquinone as an electron acceptor. Part of the enzyme membrane arm which is embedded in the lipid bilayer and involved in proton translocation. This chain is NADH-ubiquinone oxidoreductase chain 4L (MT-ND4L), found in Tamandua tetradactyla (Southern anteater).